The following is a 307-amino-acid chain: Small ribosomal subunit protein uS5m (307 aa).

The transit peptide at 1-13 (MFKRQLSTSVRYL) directs the protein to the mitochondrion. Positions 144–208 (LTMKPLVMKR…WDAVRNLKEI (65 aa)) constitute an S5 DRBM domain.

It belongs to the universal ribosomal protein uS5 family. As to quaternary structure, component of the mitochondrial small ribosomal subunit (mt-SSU). Mature yeast 74S mitochondrial ribosomes consist of a small (37S) and a large (54S) subunit. The 37S small subunit contains a 15S ribosomal RNA (15S mt-rRNA) and 34 different proteins. The 54S large subunit contains a 21S rRNA (21S mt-rRNA) and 46 different proteins. uS3m, uS4m and uS5m form the narrow entry site of the mRNA channel.

It is found in the mitochondrion. Component of the mitochondrial ribosome (mitoribosome), a dedicated translation machinery responsible for the synthesis of mitochondrial genome-encoded proteins, including at least some of the essential transmembrane subunits of the mitochondrial respiratory chain. The mitoribosomes are attached to the mitochondrial inner membrane and translation products are cotranslationally integrated into the membrane. In Saccharomyces cerevisiae (strain ATCC 204508 / S288c) (Baker's yeast), this protein is Small ribosomal subunit protein uS5m (MRPS5).